Here is a 485-residue protein sequence, read N- to C-terminus: Inosine-5'-monophosphate dehydrogenase (485 aa).

CBS domains are found at residues 99 to 154 (IVED…TVKE) and 156 to 212 (MTRE…KNAV). NAD(+) is bound by residues D247 and 294–296 (GIG). G296 and G298 together coordinate K(+). S299 contacts IMP. A K(+)-binding site is contributed by C301. The active-site Thioimidate intermediate is C301. Residues 334–336 (DGG), 357–358 (GN), and 381–385 (YRGMG) each bind IMP. Catalysis depends on R397, which acts as the Proton acceptor. Residue E412 participates in IMP binding. 3 residues coordinate K(+): E466, S467, and H468.

This sequence belongs to the IMPDH/GMPR family. As to quaternary structure, homotetramer. It depends on K(+) as a cofactor.

It catalyses the reaction IMP + NAD(+) + H2O = XMP + NADH + H(+). Its pathway is purine metabolism; XMP biosynthesis via de novo pathway; XMP from IMP: step 1/1. Mycophenolic acid (MPA) is a non-competitive inhibitor that prevents formation of the closed enzyme conformation by binding to the same site as the amobile flap. In contrast, mizoribine monophosphate (MZP) is a competitive inhibitor that induces the closed conformation. MPA is a potent inhibitor of mammalian IMPDHs but a poor inhibitor of the bacterial enzymes. MZP is a more potent inhibitor of bacterial IMPDH. Its function is as follows. Catalyzes the conversion of inosine 5'-phosphate (IMP) to xanthosine 5'-phosphate (XMP), the first committed and rate-limiting step in the de novo synthesis of guanine nucleotides, and therefore plays an important role in the regulation of cell growth. The protein is Inosine-5'-monophosphate dehydrogenase of Pyrococcus furiosus (strain ATCC 43587 / DSM 3638 / JCM 8422 / Vc1).